An 877-amino-acid chain; its full sequence is Mediator of RNA polymerase II transcription subunit 16 (877 aa).

WD repeat units lie at residues 21 to 71, 72 to 119, 120 to 165, 166 to 203, 204 to 257, 258 to 334, 335 to 415, 416 to 460, and 461 to 495; these read WEKW…EHPW, DLHS…NSWE, SSVG…VKFS, PSLT…LTST, ESLC…RIDT, EILP…DKQP, TILK…RPVD, EPAM…LSPS, and MGHP…LLHV. Residues 848-877 form a disordered region; sequence PAFVQLGPQSTHHSPRTPRSLDHLHPEDRP. Basic and acidic residues predominate over residues 866–877; the sequence is RSLDHLHPEDRP.

The protein belongs to the Mediator complex subunit 16 family. Component of the Mediator complex, which is composed of MED1, MED4, MED6, MED7, MED8, MED9, MED10, MED11, MED12, MED13, MED13L, MED14, MED15, MED16, MED17, MED18, MED19, MED20, MED21, MED22, MED23, MED24, MED25, MED26, MED27, MED29, MED30, MED31, CCNC, CDK8 and CDC2L6/CDK11. The MED12, MED13, CCNC and CDK8 subunits form a distinct module termed the CDK8 module. Mediator containing the CDK8 module is less active than Mediator lacking this module in supporting transcriptional activation. Individual preparations of the Mediator complex lacking one or more distinct subunits have been variously termed ARC, CRSP, DRIP, PC2, SMCC and TRAP.

It is found in the nucleus. Component of the Mediator complex, a coactivator involved in the regulated transcription of nearly all RNA polymerase II-dependent genes. Mediator functions as a bridge to convey information from gene-specific regulatory proteins to the basal RNA polymerase II transcription machinery. Mediator is recruited to promoters by direct interactions with regulatory proteins and serves as a scaffold for the assembly of a functional preinitiation complex with RNA polymerase II and the general transcription factors. This Homo sapiens (Human) protein is Mediator of RNA polymerase II transcription subunit 16 (MED16).